Consider the following 150-residue polypeptide: Small ribosomal subunit protein eS19 (150 aa).

It belongs to the eukaryotic ribosomal protein eS19 family. As to quaternary structure, part of the 30S ribosomal subunit.

In terms of biological role, may be involved in maturation of the 30S ribosomal subunit. This Thermoplasma volcanium (strain ATCC 51530 / DSM 4299 / JCM 9571 / NBRC 15438 / GSS1) protein is Small ribosomal subunit protein eS19.